A 485-amino-acid chain; its full sequence is Protein adenylyltransferase Fic (485 aa).

The helical transmembrane segment at 21-43 (YRFVLFFIAGSLAAFAFHALTSS) threads the bilayer. 2 TPR repeats span residues 107-140 (AMGALRLAQEMYMAGKDDKAARLFEHALALAPKH) and 141-175 (PEVLLRYGEFLEHNQRNIVLADQYYFQALCISPSN). The short motif at 232-237 (SVGIEG) is the Inhibitory (S/T)XXXE(G/N) motif element. ATP-binding positions include glutamate 236 and 317–320 (VGGH). The Fido domain occupies 286-421 (ITLKDILELH…IRPFVRFIAD (136 aa)). Histidine 364 is an active-site residue. ATP is bound by residues 368–375 (DGNGRTSR), 400–401 (YY), and asparagine 408.

It belongs to the fic family. Homodimer.

The protein resides in the membrane. It catalyses the reaction L-tyrosyl-[protein] + ATP = O-(5'-adenylyl)-L-tyrosyl-[protein] + diphosphate. The catalysed reaction is L-threonyl-[protein] + ATP = 3-O-(5'-adenylyl)-L-threonyl-[protein] + diphosphate. The enzyme catalyses 3-O-(5'-adenylyl)-L-threonyl-[protein] + H2O = L-threonyl-[protein] + AMP + H(+). Its activity is regulated as follows. The side chain of Glu-236 determines which of the two opposing activities (AMPylase or de-AMPylase) will take place. In response to endoplasmic reticulum stress, mediates de-AMPylase activity. Adenylyltransferase activity is inhibited by the inhibitory helix present at the N-terminus: Glu-236 binds ATP and competes with ATP-binding at Arg-375, thereby preventing adenylyltransferase activity. In unstressed cells, disengagement of Glu-236 promotes adenylyltransferase activity. Activation dissociates ATP-binding from Glu-236, allowing ordered binding of the entire ATP moiety with the alpha-phosphate in an orientation that is productive for accepting an incoming target hydroxyl side chain. Its function is as follows. Protein that can both mediate the addition of adenosine 5'-monophosphate (AMP) to specific residues of target proteins (AMPylation), and the removal of the same modification from target proteins (de-AMPylation), depending on the context. The side chain of Glu-236 determines which of the two opposing activities (AMPylase or de-AMPylase) will take place. Acts as a key regulator of the unfolded protein response (UPR) by mediating AMPylation or de-AMPylation of Hsc70-3/BiP. In unstressed cells, acts as an adenylyltransferase by mediating AMPylation of Hsc70-3/BiP at 'Thr-518', thereby inactivating it. In response to endoplasmic reticulum stress, acts as a phosphodiesterase by mediating removal of ATP (de-AMPylation) from Hsc70-3/BiP at 'Thr-518', leading to restore HSPA5/BiP activity. This chain is Protein adenylyltransferase Fic, found in Drosophila virilis (Fruit fly).